The chain runs to 231 residues: NADH-ubiquinone oxidoreductase chain 4 (231 aa).

Transmembrane regions (helical) follow at residues 1–21 (PIAG…YGII), 34–54 (MFLP…LTCL), 63–85 (IAYS…TPWG), 89–111 (AMAL…NTTY), 128–148 (ILPM…AIPP), 156–176 (LLIM…LGLS), and 211–231 (LLMI…ELII).

It belongs to the complex I subunit 4 family.

The protein localises to the mitochondrion membrane. The catalysed reaction is a ubiquinone + NADH + 5 H(+)(in) = a ubiquinol + NAD(+) + 4 H(+)(out). Core subunit of the mitochondrial membrane respiratory chain NADH dehydrogenase (Complex I) that is believed to belong to the minimal assembly required for catalysis. Complex I functions in the transfer of electrons from NADH to the respiratory chain. The immediate electron acceptor for the enzyme is believed to be ubiquinone. This is NADH-ubiquinone oxidoreductase chain 4 (MT-ND4) from Agkistrodon piscivorus piscivorus (Eastern cottonmouth).